Consider the following 159-residue polypeptide: Mating-type P-specific polypeptide Pi (159 aa).

A DNA-binding region (homeobox; TALE-type; partial) is located at residues 103–159 (MTTVRGQCSKCTKPHLMRWLLLHYDNPYPSNSEFYDLSAATGLTRTQLRNWFSNRRR).

Belongs to the TALE/M-ATYP homeobox family.

Its subcellular location is the nucleus. Functionally, mating type proteins are sequence specific DNA-binding proteins that act as master switches in yeast differentiation by controlling gene expression in a cell type-specific fashion. Required for meiosis, but plays no role in conjugation. The sequence is that of Mating-type P-specific polypeptide Pi (matPi) from Schizosaccharomyces kambucha (Fission yeast).